Here is a 221-residue protein sequence, read N- to C-terminus: Vesicle-associated membrane protein 722 (221 aa).

Residues 1–196 (MAQQSLIYSF…MWFQNMKIKL (196 aa)) lie on the Cytoplasmic side of the membrane. A Longin domain is found at 10-114 (FVARGTVILV…SLNKEFGSKL (105 aa)). In terms of domain architecture, v-SNARE coiled-coil homology spans 130-190 (KLAKVKAQVS…TQMRRKMWFQ (61 aa)). A helical; Anchor for type IV membrane protein membrane pass occupies residues 197-217 (IVLAIIIALILIIILSICGGF). At 218–221 (NCGK) the chain is on the vesicular side.

Belongs to the synaptobrevin family. Highly expressed in stems and roots. Detected in flowers and leaves.

Its subcellular location is the cell membrane. It localises to the early endosome membrane. Involved in the targeting and/or fusion of transport vesicles to their target membrane. The polypeptide is Vesicle-associated membrane protein 722 (Arabidopsis thaliana (Mouse-ear cress)).